The sequence spans 315 residues: Polyprenyl transferase mpaA (315 aa).

Helical transmembrane passes span 40–60 (IEFI…LCGA), 84–103 (LASG…GQYF), 118–135 (IWSL…YPYL), 143–163 (VFVY…ITGW), 174–194 (GDII…CVYF), 224–244 (LFLA…ISTI), 248–268 (WLWV…IAQF), and 279–299 (IHWD…VEVG).

It belongs to the UbiA prenyltransferase family. The cofactor is Mg(2+).

The protein localises to the golgi apparatus membrane. The enzyme catalyses 5,7-dihydroxy-4-methylphthalide + (2E,6E)-farnesyl diphosphate = 4-farnesyl-3,5-dihydroxy-6-methylphthalide + diphosphate. It participates in secondary metabolite biosynthesis; terpenoid biosynthesis. In terms of biological role, polyprenyl transferase; part of the gene cluster that mediates the biosynthesis of mycophenolic acid (MPA), the first isolated antibiotic natural product in the world obtained from a culture of Penicillium brevicompactum in 1893. MpaA is a Golgi apparatus-associated enzyme that catalyzes the prenylation of 5,7-dihydroxy-4,6-dimethylphthalide (DHMP) to yield farnesyl-DHMP (FDHMP). The first step of the pathway is the synthesis of 5-methylorsellinic acid (5MOA) by the cytosolic polyketide synthase mpaC. 5MOA is then converted to the phthalide compound 5,7-dihydroxy-4,6-dimethylphthalide (DHMP) by the endoplasmic reticulum-bound cytochrome P450 monooxygenase mpaDE. MpaDE first catalyzes hydroxylation of 5-MOA to 4,6-dihydroxy-2-(hydroxymethyl)-3-methylbenzoic acid (DHMB). MpaDE then acts as a lactone synthase that catalyzes the ring closure to convert DHMB into DHMP. The next step is the prenylation of DHMP by the Golgi apparatus-associated prenyltransferase mpaA to yield farnesyl-DHMP (FDHMP). The ER-bound oxygenase mpaB then mediates the oxidative cleavage the C19-C20 double bond in FDHMP to yield FDHMP-3C via a mycophenolic aldehyde intermediate. The O-methyltransferase mpaG catalyzes the methylation of FDHMP-3C to yield MFDHMP-3C. After the cytosolic methylation of FDHMP-3C, MFDHMP-3C enters into peroxisomes probably via free diffusion due to its low molecular weight. Upon a peroxisomal CoA ligation reaction, catalyzed by a beta-oxidation component enzyme acyl-CoA ligase ACL891, MFDHMP-3C-CoA would then be restricted to peroxisomes for the following beta-oxidation pathway steps. The peroxisomal beta-oxidation machinery than converts MFDHMP-3C-CoA into MPA_CoA, via a beta-oxidation chain-shortening process. Finally mpaH acts as a peroxisomal acyl-CoA hydrolase with high substrate specificity toward MPA-CoA to release the final product MPA. The chain is Polyprenyl transferase mpaA from Penicillium brevicompactum.